A 161-amino-acid chain; its full sequence is Negative cofactor 2 complex subunit beta (161 aa).

The Histone-fold domain maps to 11–75; the sequence is SLPKATVQKM…IAAEHIIKAL (65 aa). A compositionally biased stretch (basic and acidic residues) spans 93 to 107; sequence EHKEQQKNREKKSSK. 2 disordered regions span residues 93–116 and 130–161; these read EHKEQQKNREKKSSKFEQSGVSRD and RERFKNQNIAHDNHTTTAIPVPTASETETKEN. A compositionally biased stretch (polar residues) spans 135–147; sequence NQNIAHDNHTTTA.

Belongs to the NC2 beta/DR1 family.

Its subcellular location is the cytoplasm. It localises to the nucleus. The protein is Negative cofactor 2 complex subunit beta (ncb2) of Schizosaccharomyces pombe (strain 972 / ATCC 24843) (Fission yeast).